A 781-amino-acid polypeptide reads, in one-letter code: MTEPLHTSSNGGAERGPNAAFESEKTLQTTTRLQRFDSLHMEAGKIPGGQSHTAKVGWATTLHLAFQSIGVVYGDMGTSPLYVFSSTFTNGIKDTNDILGVMSLIIYTVVLLPLIKYCFIVLRANDNGDGGTFALYSLISRYARISLIPNQQAEDAMVSHYKLESPSNRVKRAHWIKEKMENSPNFKIILFLVTILATSMVIGDGVLTPCISVLSAVGGIKESAKSLTQGQIAGIAIAILIVLFLVQRFGTDKVGYSFGPIILTWFIFIAGTGVYNLFKHDTGVLKAFNPKYIVDYFERNGKQGWISLGGVILCITGTEAMFADLGHFNVRAIQIGFSVVLLPSVLLAYIGQAAYLRIYPEHVADTFYKSIPDPLYWPTFVVAVAAAIIASQAMISGAFAIIAQSQILGCFPRVRVIHTSTKFHGQVYIPEINYVLMVLCVAVTAIFQTTDKIGNAYGIAVVFVMFITTLLVTLVMVMIWKTSLLWIALFPVIFGGAELIYLSSAFYKFTQGGYLPLVFSAILMFIMATWHYVHVHRYKYELRNKVSNNYVAELAVKQNLARLPGIGFLYSELVQGIPPILPHLVEKVPSIHSVLVIISIKYLPISKIETKERFLFRYVEPKEYRVFRCVVRYGYNDKVEDPAEFESLVIENLKQFIHEESLYSQSSHSLEGESIKEIGGVTDPTSEVQDAMSSRNNSDQHTTEPRNGCMDEIQSIHKEMGNGVVHLLGETNVVAEPNADFLKKIIVDYVYNFIRKNFRQPEKITCVPHNRLLRVGMTYEI.

Residues 1–11 (MTEPLHTSSNG) show a composition bias toward polar residues. Residues 1–24 (MTEPLHTSSNGGAERGPNAAFESE) are disordered. At 1–63 (MTEPLHTSSN…AKVGWATTLH (63 aa)) the chain is on the cytoplasmic side. A helical transmembrane segment spans residues 64-84 (LAFQSIGVVYGDMGTSPLYVF). Residues 85-100 (SSTFTNGIKDTNDILG) are Extracellular-facing. Residues 101-121 (VMSLIIYTVVLLPLIKYCFIV) form a helical membrane-spanning segment. Residues 122–187 (LRANDNGDGG…EKMENSPNFK (66 aa)) are Cytoplasmic-facing. A helical membrane pass occupies residues 188 to 208 (IILFLVTILATSMVIGDGVLT). Topologically, residues 209–225 (PCISVLSAVGGIKESAK) are extracellular. Residues 226–246 (SLTQGQIAGIAIAILIVLFLV) form a helical membrane-spanning segment. Residues 247-257 (QRFGTDKVGYS) are Cytoplasmic-facing. The chain crosses the membrane as a helical span at residues 258-278 (FGPIILTWFIFIAGTGVYNLF). The Extracellular segment spans residues 279-304 (KHDTGVLKAFNPKYIVDYFERNGKQG). A helical transmembrane segment spans residues 305–325 (WISLGGVILCITGTEAMFADL). Residues 326 to 334 (GHFNVRAIQ) lie on the Cytoplasmic side of the membrane. The chain crosses the membrane as a helical span at residues 335–355 (IGFSVVLLPSVLLAYIGQAAY). At 356-381 (LRIYPEHVADTFYKSIPDPLYWPTFV) the chain is on the extracellular side. A helical membrane pass occupies residues 382 to 402 (VAVAAAIIASQAMISGAFAII). Residues 403–426 (AQSQILGCFPRVRVIHTSTKFHGQ) lie on the Cytoplasmic side of the membrane. A helical transmembrane segment spans residues 427–447 (VYIPEINYVLMVLCVAVTAIF). The Extracellular portion of the chain corresponds to 448–458 (QTTDKIGNAYG). Residues 459 to 479 (IAVVFVMFITTLLVTLVMVMI) traverse the membrane as a helical segment. Residues 480–481 (WK) are Cytoplasmic-facing. The chain crosses the membrane as a helical span at residues 482-502 (TSLLWIALFPVIFGGAELIYL). The Extracellular portion of the chain corresponds to 503–512 (SSAFYKFTQG). Residues 513-533 (GYLPLVFSAILMFIMATWHYV) traverse the membrane as a helical segment. Residues 534–781 (HVHRYKYELR…LLRVGMTYEI (248 aa)) are Cytoplasmic-facing. The interval 681-707 (VTDPTSEVQDAMSSRNNSDQHTTEPRN) is disordered. Polar residues predominate over residues 683–700 (DPTSEVQDAMSSRNNSDQ).

This sequence belongs to the HAK/KUP transporter (TC 2.A.72.3) family. In terms of tissue distribution, expressed in root epidermis, parenchyma of stele tissue and primordial of the lateral root, root-shoot junctions and leaf sheaths. Expressed in germinated embryonic tissue, young tillers, flower organs and pedicels.

Its subcellular location is the cell membrane. The enzyme catalyses K(+)(in) = K(+)(out). Its function is as follows. High-affinity potassium transporter. Its potassium transporter activity does not seem to be affected by high sodium and low potassium concentrations in the extracellular environment. Invloved in salt stress tolerance by enhancing root potassium uptake and translocation to the shoot to prevent sodium influx during salt stress. Involved in the positive regulation of disease resistance against the rice grassy stunt virus by promoting potassium transport and increasing endogenous plant potassium. This Oryza sativa subsp. japonica (Rice) protein is Potassium transporter 5 (HAK5).